We begin with the raw amino-acid sequence, 149 residues long: Transcriptional repressor NrdR (149 aa).

Residues 3-34 fold into a zinc finger; it reads CPFCSAVDTKVIDSRLVGEGSQVRRRRQCLVC. An ATP-cone domain is found at 49 to 139; sequence PRVIKSNEVR…VYRSFEDIRE (91 aa).

It belongs to the NrdR family. Zn(2+) is required as a cofactor.

In terms of biological role, negatively regulates transcription of bacterial ribonucleotide reductase nrd genes and operons by binding to NrdR-boxes. This chain is Transcriptional repressor NrdR, found in Pectobacterium atrosepticum (strain SCRI 1043 / ATCC BAA-672) (Erwinia carotovora subsp. atroseptica).